Reading from the N-terminus, the 245-residue chain is tRNA pseudouridine synthase A (245 aa).

Aspartate 52 acts as the Nucleophile in catalysis. Residue tyrosine 111 coordinates substrate.

It belongs to the tRNA pseudouridine synthase TruA family. Homodimer.

It carries out the reaction uridine(38/39/40) in tRNA = pseudouridine(38/39/40) in tRNA. Formation of pseudouridine at positions 38, 39 and 40 in the anticodon stem and loop of transfer RNAs. This chain is tRNA pseudouridine synthase A, found in Zymomonas mobilis subsp. mobilis (strain ATCC 31821 / ZM4 / CP4).